A 305-amino-acid polypeptide reads, in one-letter code: Probable lipid kinase YegS-like (305 aa).

The region spanning 1–129 (MTQRRAMLIL…VDLGEVGGKL (129 aa)) is the DAGKc domain. ATP-binding positions include Thr-39, 65–71 (GDGTLRD), and Thr-92. Mg(2+)-binding residues include Leu-210, Asp-213, and Leu-215. The Proton acceptor role is filled by Glu-268.

This sequence belongs to the diacylglycerol/lipid kinase family. YegS lipid kinase subfamily. It depends on Mg(2+) as a cofactor. The cofactor is Ca(2+).

The protein resides in the cytoplasm. In terms of biological role, probably phosphorylates lipids; the in vivo substrate is unknown. The polypeptide is Probable lipid kinase YegS-like (Pseudomonas syringae pv. tomato (strain ATCC BAA-871 / DC3000)).